The primary structure comprises 159 residues: Large ribosomal subunit protein uL11 (159 aa).

It belongs to the universal ribosomal protein uL11 family. As to quaternary structure, part of the ribosomal stalk of the 50S ribosomal subunit. Interacts with L10 and the large rRNA to form the base of the stalk. L10 forms an elongated spine to which L12 dimers bind in a sequential fashion forming a multimeric L10(L12)X complex.

Its function is as follows. Forms part of the ribosomal stalk which helps the ribosome interact with GTP-bound translation factors. In Nitrosopumilus maritimus (strain SCM1), this protein is Large ribosomal subunit protein uL11.